We begin with the raw amino-acid sequence, 209 residues long: Large ribosomal subunit protein uL3 (209 aa).

Q150 is modified (N5-methylglutamine).

The protein belongs to the universal ribosomal protein uL3 family. In terms of assembly, part of the 50S ribosomal subunit. Forms a cluster with proteins L14 and L19. In terms of processing, methylated by PrmB.

Its function is as follows. One of the primary rRNA binding proteins, it binds directly near the 3'-end of the 23S rRNA, where it nucleates assembly of the 50S subunit. This Buchnera aphidicola subsp. Acyrthosiphon pisum (strain 5A) protein is Large ribosomal subunit protein uL3.